The chain runs to 236 residues: Orotidine 5'-phosphate decarboxylase (236 aa).

Substrate is bound by residues aspartate 14, lysine 36, 63–72 (DLKYHDIPNT), threonine 122, arginine 183, glutamine 192, glycine 212, and arginine 213. The active-site Proton donor is lysine 65.

This sequence belongs to the OMP decarboxylase family. Type 1 subfamily. In terms of assembly, homodimer.

The catalysed reaction is orotidine 5'-phosphate + H(+) = UMP + CO2. It participates in pyrimidine metabolism; UMP biosynthesis via de novo pathway; UMP from orotate: step 2/2. In terms of biological role, catalyzes the decarboxylation of orotidine 5'-monophosphate (OMP) to uridine 5'-monophosphate (UMP). This is Orotidine 5'-phosphate decarboxylase from Halorhodospira halophila (strain DSM 244 / SL1) (Ectothiorhodospira halophila (strain DSM 244 / SL1)).